A 444-amino-acid chain; its full sequence is DNA repair protein RadA (444 aa).

The C4-type zinc-finger motif lies at 8 to 25; that stretch reads CSNCGNISPKWSGQCFDC. An ATP-binding site is contributed by 89 to 96; it reads GDPGIGKS. The RadA KNRFG motif motif lies at 248–252; the sequence is KNRFG. The lon-protease-like stretch occupies residues 347–444; that stretch reads EVYLSIAGGL…HLKDLKEIIK (98 aa).

This sequence belongs to the RecA family. RadA subfamily.

Its function is as follows. DNA-dependent ATPase involved in processing of recombination intermediates, plays a role in repairing DNA breaks. Stimulates the branch migration of RecA-mediated strand transfer reactions, allowing the 3' invading strand to extend heteroduplex DNA faster. Binds ssDNA in the presence of ADP but not other nucleotides, has ATPase activity that is stimulated by ssDNA and various branched DNA structures, but inhibited by SSB. Does not have RecA's homology-searching function. The polypeptide is DNA repair protein RadA (Rickettsia conorii (strain ATCC VR-613 / Malish 7)).